Consider the following 382-residue polypeptide: Lipid-A-disaccharide synthase (382 aa).

This sequence belongs to the LpxB family.

It catalyses the reaction 2-N,3-O-bis[(3R)-3-hydroxytetradecanoyl]-alpha-D-glucosaminyl 1-phosphate + UDP-2-N,3-O-bis[(3R)-3-hydroxytetradecanoyl]-alpha-D-glucosamine = lipid A disaccharide (E. coli) + UDP + H(+). The catalysed reaction is a lipid X + a UDP-2-N,3-O-bis[(3R)-3-hydroxyacyl]-alpha-D-glucosamine = a lipid A disaccharide + UDP + H(+). It functions in the pathway glycolipid biosynthesis; lipid IV(A) biosynthesis; lipid IV(A) from (3R)-3-hydroxytetradecanoyl-[acyl-carrier-protein] and UDP-N-acetyl-alpha-D-glucosamine: step 5/6. In terms of biological role, condensation of UDP-2,3-diacylglucosamine and 2,3-diacylglucosamine-1-phosphate to form lipid A disaccharide, a precursor of lipid A, a phosphorylated glycolipid that anchors the lipopolysaccharide to the outer membrane of the cell. The chain is Lipid-A-disaccharide synthase from Salmonella typhimurium (strain LT2 / SGSC1412 / ATCC 700720).